The chain runs to 541 residues: Chaperonin GroEL 2 (541 aa).

ATP is bound by residues 30 to 33 (TLGP), lysine 51, 87 to 91 (DGTTT), glycine 415, and aspartate 496.

The protein belongs to the chaperonin (HSP60) family. Forms a cylinder of 14 subunits composed of two heptameric rings stacked back-to-back. Interacts with the co-chaperonin GroES.

Its subcellular location is the cytoplasm. The enzyme catalyses ATP + H2O + a folded polypeptide = ADP + phosphate + an unfolded polypeptide.. Functionally, together with its co-chaperonin GroES, plays an essential role in assisting protein folding. The GroEL-GroES system forms a nano-cage that allows encapsulation of the non-native substrate proteins and provides a physical environment optimized to promote and accelerate protein folding. This is Chaperonin GroEL 2 from Bradyrhizobium sp. (strain BTAi1 / ATCC BAA-1182).